Consider the following 505-residue polypeptide: Cytochrome P450 2K6 (505 aa).

Residues 7–27 form a helical membrane-spanning segment; that stretch reads FLLQGSPTGTILGALLLFLVI. Residue C448 participates in heme binding.

This sequence belongs to the cytochrome P450 family. It depends on heme as a cofactor. As to expression, detected in liver and ovary.

It localises to the endoplasmic reticulum membrane. The protein localises to the microsome membrane. In terms of biological role, metabolizes aflatoxin B1 (AFB1) to the cytotoxic derivative AFB1 exo-8,9-epoxide. Does not show activity towards lauric acid. The polypeptide is Cytochrome P450 2K6 (Danio rerio (Zebrafish)).